The following is a 447-amino-acid chain: Sporulation protein YpeB (447 aa).

It belongs to the YpeB family.

Its function is as follows. Required for spore cortex hydrolysis during germination. Appears to be required for either expression, localization, activation or function of SleB. This is Sporulation protein YpeB from Oceanobacillus iheyensis (strain DSM 14371 / CIP 107618 / JCM 11309 / KCTC 3954 / HTE831).